Consider the following 155-residue polypeptide: Molybdopterin synthase catalytic subunit (155 aa).

Substrate contacts are provided by residues 109–110 (HR), Lys125, and 132–134 (KKE).

It belongs to the MoaE family. MOCS2B subfamily. In terms of assembly, heterotetramer; composed of 2 small (MOCS2A) and 2 large (MOCS2B) subunits.

It localises to the cytoplasm. It is found in the cytosol. The enzyme catalyses 2 [molybdopterin-synthase sulfur-carrier protein]-C-terminal-Gly-aminoethanethioate + cyclic pyranopterin phosphate + H2O = molybdopterin + 2 [molybdopterin-synthase sulfur-carrier protein]-C-terminal Gly-Gly + 2 H(+). The protein operates within cofactor biosynthesis; molybdopterin biosynthesis. Functionally, catalytic subunit of the molybdopterin synthase complex, a complex that catalyzes the conversion of precursor Z into molybdopterin. Acts by mediating the incorporation of 2 sulfur atoms from thiocarboxylated MOCS2A into precursor Z to generate a dithiolene group. The chain is Molybdopterin synthase catalytic subunit from Taeniopygia guttata (Zebra finch).